The sequence spans 157 residues: Endoribonuclease YbeY (157 aa).

Residues His116, His120, and His126 each contribute to the Zn(2+) site.

Belongs to the endoribonuclease YbeY family. Zn(2+) serves as cofactor.

The protein localises to the cytoplasm. Single strand-specific metallo-endoribonuclease involved in late-stage 70S ribosome quality control and in maturation of the 3' terminus of the 16S rRNA. This chain is Endoribonuclease YbeY, found in Pseudarthrobacter chlorophenolicus (strain ATCC 700700 / DSM 12829 / CIP 107037 / JCM 12360 / KCTC 9906 / NCIMB 13794 / A6) (Arthrobacter chlorophenolicus).